The primary structure comprises 79 residues: Acyl carrier protein (79 aa).

A Carrier domain is found at 2–77 (SEIGERVKKI…DATKFLEKNA (76 aa)). Ser37 carries the O-(pantetheine 4'-phosphoryl)serine modification.

It belongs to the acyl carrier protein (ACP) family. Post-translationally, 4'-phosphopantetheine is transferred from CoA to a specific serine of apo-ACP by AcpS. This modification is essential for activity because fatty acids are bound in thioester linkage to the sulfhydryl of the prosthetic group.

The protein localises to the cytoplasm. The protein operates within lipid metabolism; fatty acid biosynthesis. Functionally, carrier of the growing fatty acid chain in fatty acid biosynthesis. The sequence is that of Acyl carrier protein from Rhodopseudomonas palustris (strain HaA2).